The following is a 380-amino-acid chain: Cytochrome b (380 aa).

The next 4 membrane-spanning stretches (helical) occupy residues 33 to 53 (FGSL…FLAM), 77 to 98 (WLIR…YLHV), 113 to 133 (WNIG…GYVL), and 178 to 198 (FFAF…LHLL). Heme b is bound by residues histidine 83 and histidine 97. 2 residues coordinate heme b: histidine 182 and histidine 196. A ubiquinone is bound at residue histidine 201. A run of 4 helical transmembrane segments spans residues 226-246 (YKDI…ALFS), 288-308 (LGGV…PILH), 320-340 (FSQF…WIGG), and 347-367 (FIII…LLIP).

It belongs to the cytochrome b family. The cytochrome bc1 complex contains 3 respiratory subunits (MT-CYB, CYC1 and UQCRFS1), 2 core proteins (UQCRC1 and UQCRC2) and probably 6 low-molecular weight proteins. It depends on heme b as a cofactor.

It localises to the mitochondrion inner membrane. Functionally, component of the ubiquinol-cytochrome c reductase complex (complex III or cytochrome b-c1 complex) that is part of the mitochondrial respiratory chain. The b-c1 complex mediates electron transfer from ubiquinol to cytochrome c. Contributes to the generation of a proton gradient across the mitochondrial membrane that is then used for ATP synthesis. In Arapaima gigas (Arapaima), this protein is Cytochrome b (mt-cyb).